Consider the following 284-residue polypeptide: 4-diphosphocytidyl-2-C-methyl-D-erythritol kinase (284 aa).

Residue Lys-10 is part of the active site. 95-105 (PVAAGLGGGSS) lines the ATP pocket. Residue Asp-137 is part of the active site.

Belongs to the GHMP kinase family. IspE subfamily.

It carries out the reaction 4-CDP-2-C-methyl-D-erythritol + ATP = 4-CDP-2-C-methyl-D-erythritol 2-phosphate + ADP + H(+). It participates in isoprenoid biosynthesis; isopentenyl diphosphate biosynthesis via DXP pathway; isopentenyl diphosphate from 1-deoxy-D-xylulose 5-phosphate: step 3/6. Catalyzes the phosphorylation of the position 2 hydroxy group of 4-diphosphocytidyl-2C-methyl-D-erythritol. The polypeptide is 4-diphosphocytidyl-2-C-methyl-D-erythritol kinase (Levilactobacillus brevis (strain ATCC 367 / BCRC 12310 / CIP 105137 / JCM 1170 / LMG 11437 / NCIMB 947 / NCTC 947) (Lactobacillus brevis)).